The primary structure comprises 476 residues: Probable cytosolic Fe-S cluster assembly factor GH10760 (476 aa).

[4Fe-4S] cluster contacts are provided by Cys23, Cys68, Cys71, Cys74, Cys187, Cys243, Cys395, and Cys399.

The protein belongs to the NARF family.

Functionally, component of the cytosolic iron-sulfur (Fe/S) protein assembly machinery. Required for maturation of extramitochondrial Fe/S proteins. This is Probable cytosolic Fe-S cluster assembly factor GH10760 from Drosophila grimshawi (Hawaiian fruit fly).